Here is a 64-residue protein sequence, read N- to C-terminus: Delta-buthitoxin-Hj2a (64 aa).

Cystine bridges form between Cys12–Cys63, Cys16–Cys36, Cys22–Cys46, and Cys26–Cys48. At Arg64 the chain carries Arginine amide.

This sequence belongs to the long (4 C-C) scorpion toxin superfamily. Sodium channel inhibitor family. Alpha subfamily. Expressed by the venom gland.

The protein resides in the secreted. Its function is as follows. This non-amidated recombinant toxin slows fast inactivation on Nav1.1/SCN1A (EC(50)=52.8 nM), Nav1.4/SN4A (EC(50)=32 nM), Nav1.5/SCN5A (EC(50)=116.7 nM), Nav1.6/SCN8A (EC(50)=46.3 nM), and Nav1.7/SCN9A (EC(50)=147.4 nM) voltage-gated sodium channels. On Nav1.1/SCN1A channel, acts as an agonist by inducing a shift in both the voltage dependence of channel inactivation (alpha-toxin activity) and activation (beta-toxin activity). This is Delta-buthitoxin-Hj2a from Hottentotta judaicus (Black scorpion).